A 477-amino-acid chain; its full sequence is UDP-N-acetylmuramate--L-alanine ligase (477 aa).

120-126 is an ATP binding site; sequence GSHGKTT.

The protein belongs to the MurCDEF family.

It is found in the cytoplasm. The catalysed reaction is UDP-N-acetyl-alpha-D-muramate + L-alanine + ATP = UDP-N-acetyl-alpha-D-muramoyl-L-alanine + ADP + phosphate + H(+). It functions in the pathway cell wall biogenesis; peptidoglycan biosynthesis. Functionally, cell wall formation. This is UDP-N-acetylmuramate--L-alanine ligase from Rickettsia canadensis (strain McKiel).